The sequence spans 1234 residues: DNA-directed RNA polymerase I subunit RPA2 (1234 aa).

A C4-type zinc finger spans residues C1119–C1150.

The protein belongs to the RNA polymerase beta chain family. As to quaternary structure, component of the RNA polymerase I (Pol I) complex consisting of 14 subunits.

Its subcellular location is the nucleus. It is found in the nucleolus. The enzyme catalyses RNA(n) + a ribonucleoside 5'-triphosphate = RNA(n+1) + diphosphate. In terms of biological role, DNA-dependent RNA polymerase catalyzes the transcription of DNA into RNA using the four ribonucleoside triphosphates as substrates. Second largest core component of RNA polymerase I which synthesizes ribosomal RNA precursors. Proposed to contribute to the polymerase catalytic activity and forms the polymerase active center together with the largest subunit. Pol I is composed of mobile elements and RPA2 is part of the core element with the central large cleft and probably a clamp element that moves to open and close the cleft. This chain is DNA-directed RNA polymerase I subunit RPA2 (acr-2), found in Neurospora crassa (strain ATCC 24698 / 74-OR23-1A / CBS 708.71 / DSM 1257 / FGSC 987).